The sequence spans 1114 residues: Isoleucine--tRNA ligase (1114 aa).

The 'HIGH' region motif lies at 61 to 71; the sequence is PTANGQPGTHH. The 'KMSKS' region motif lies at 640–644; it reads KMSKH. Residue Lys-643 coordinates ATP.

This sequence belongs to the class-I aminoacyl-tRNA synthetase family. IleS type 2 subfamily. As to quaternary structure, monomer. Requires Zn(2+) as cofactor.

It localises to the cytoplasm. The enzyme catalyses tRNA(Ile) + L-isoleucine + ATP = L-isoleucyl-tRNA(Ile) + AMP + diphosphate. In terms of biological role, catalyzes the attachment of isoleucine to tRNA(Ile). As IleRS can inadvertently accommodate and process structurally similar amino acids such as valine, to avoid such errors it has two additional distinct tRNA(Ile)-dependent editing activities. One activity is designated as 'pretransfer' editing and involves the hydrolysis of activated Val-AMP. The other activity is designated 'posttransfer' editing and involves deacylation of mischarged Val-tRNA(Ile). The sequence is that of Isoleucine--tRNA ligase from Cutibacterium acnes (strain DSM 16379 / KPA171202) (Propionibacterium acnes).